Here is a 314-residue protein sequence, read N- to C-terminus: Homoserine kinase (314 aa).

96-106 lines the ATP pocket; that stretch reads PIGSGLGSSAC.

This sequence belongs to the GHMP kinase family. Homoserine kinase subfamily.

Its subcellular location is the cytoplasm. The catalysed reaction is L-homoserine + ATP = O-phospho-L-homoserine + ADP + H(+). It participates in amino-acid biosynthesis; L-threonine biosynthesis; L-threonine from L-aspartate: step 4/5. In terms of biological role, catalyzes the ATP-dependent phosphorylation of L-homoserine to L-homoserine phosphate. The sequence is that of Homoserine kinase from Mannheimia succiniciproducens (strain KCTC 0769BP / MBEL55E).